The following is a 283-amino-acid chain: Splicing factor U2af small subunit B (283 aa).

The C3H1-type 1 zinc-finger motif lies at 12 to 40 (EKDRVNCPFYFKIGACRHGDRCSRLHNRP). The RRM domain occupies 44–146 (PTLLLSNMYQ…RPIIADFSPV (103 aa)). The C3H1-type 2 zinc finger occupies 148-175 (DFREATCRQYEENSCNRGGYCNFMHVKQ). A compositionally biased stretch (basic residues) spans 191-210 (SYRRGSRSRSRSISPRRKRE). A disordered region spans residues 191–283 (SYRRGSRSRS…QWNRERDEGV (93 aa)). Positions 211–245 (HSRERERGDVRDRDRHGNGKRSSDRSERHDRDGGG) are enriched in basic and acidic residues. The span at 246–259 (RRRHGSPKRSRSPR) shows a compositional bias: basic residues. Positions 260–283 (NVREGSEERRARIEQWNRERDEGV) are enriched in basic and acidic residues.

This sequence belongs to the splicing factor SR family. As to quaternary structure, component of the spliceosome. Homo- and heterodimer. Interacts with RNU1, U2AF35A and SR45.

The protein resides in the nucleus speckle. Functionally, necessary for the splicing of pre-mRNA. Probably active at the 3' splice sites. This is Splicing factor U2af small subunit B (U2AF35B) from Arabidopsis thaliana (Mouse-ear cress).